A 217-amino-acid polypeptide reads, in one-letter code: DNA repair protein homolog YobH (217 aa).

The UmuC domain occupies 1–68 (MAKAIQSSMW…RPLSKMWGIG (68 aa)).

Belongs to the DNA polymerase type-Y family.

The chain is DNA repair protein homolog YobH (yobH) from Bacillus subtilis (strain 168).